Here is a 455-residue protein sequence, read N- to C-terminus: Probable transcription factor GLK1 (455 aa).

Residues 145 to 163 (AAVEAKSSSPSSTTSSSQE) are compositionally biased toward low complexity. A disordered region spans residues 145–183 (AAVEAKSSSPSSTTSSSQEAESRHKSSSKSSHGKKKAKV). The segment covering 169 to 181 (KSSSKSSHGKKKA) has biased composition (basic residues). One can recognise an HTH myb-type domain in the interval 177–236 (GKKKAKVDWTPELHRRFVQAVEQLGIDKAVPSRILEIMGIDSLTRHNIASHLQKYRSHRK). Residues 207–232 (PSRILEIMGIDSLTRHNIASHLQKYR) constitute a DNA-binding region (H-T-H motif).

Expressed in leaves.

Its subcellular location is the nucleus. In terms of biological role, probable transcriptional activator that promotes chloroplast development. Acts as an activator of nuclear photosynthetic genes involved in chlorophyll biosynthesis, light harvesting, and electron transport. The sequence is that of Probable transcription factor GLK1 (GLK1) from Oryza sativa subsp. japonica (Rice).